The following is a 91-amino-acid chain: uncharacterized protein (91 aa).

Transmembrane regions (helical) follow at residues 10 to 30 and 46 to 66; these read VLFT…AGGI and LLVA…QALS. Residues 68 to 91 are disordered; that stretch reads MRRQDGARGTARAGRNSARRRMPS.

It localises to the cell membrane. This is an uncharacterized protein from Sinorhizobium fredii (strain NBRC 101917 / NGR234).